Here is a 190-residue protein sequence, read N- to C-terminus: Holliday junction branch migration complex subunit RuvA (190 aa).

The segment at 1-64 is domain I; it reads MIGRITGTLI…EDAQLLYGFG (64 aa). Residues 65–137 are domain II; it reads SSAERSTFRE…MRGKLGADIG (73 aa). The interval 137–141 is flexible linker; it reads GATPH. The interval 142–190 is domain III; that stretch reads AASGHQSDILNALLALGYSDKESQAALKKLPDGVDVSEGIRLALKALVR.

This sequence belongs to the RuvA family. As to quaternary structure, homotetramer. Forms an RuvA(8)-RuvB(12)-Holliday junction (HJ) complex. HJ DNA is sandwiched between 2 RuvA tetramers; dsDNA enters through RuvA and exits via RuvB. An RuvB hexamer assembles on each DNA strand where it exits the tetramer. Each RuvB hexamer is contacted by two RuvA subunits (via domain III) on 2 adjacent RuvB subunits; this complex drives branch migration. In the full resolvosome a probable DNA-RuvA(4)-RuvB(12)-RuvC(2) complex forms which resolves the HJ.

Its subcellular location is the cytoplasm. Its function is as follows. The RuvA-RuvB-RuvC complex processes Holliday junction (HJ) DNA during genetic recombination and DNA repair, while the RuvA-RuvB complex plays an important role in the rescue of blocked DNA replication forks via replication fork reversal (RFR). RuvA specifically binds to HJ cruciform DNA, conferring on it an open structure. The RuvB hexamer acts as an ATP-dependent pump, pulling dsDNA into and through the RuvAB complex. HJ branch migration allows RuvC to scan DNA until it finds its consensus sequence, where it cleaves and resolves the cruciform DNA. This Bordetella pertussis (strain Tohama I / ATCC BAA-589 / NCTC 13251) protein is Holliday junction branch migration complex subunit RuvA.